The sequence spans 218 residues: Very-long-chain (3R)-3-hydroxyacyl-CoA dehydratase hpo-8 (218 aa).

A run of 5 helical transmembrane segments spans residues 15–35 (ILGW…GLTW), 44–64 (FELK…IVGL), 86–106 (ILHL…LVAW), 137–157 (LFYV…FASL), and 176–196 (MGIS…PGFP). Active-site residues include Y142 and E149.

It belongs to the very long-chain fatty acids dehydratase HACD family.

It localises to the membrane. It carries out the reaction a very-long-chain (3R)-3-hydroxyacyl-CoA = a very-long-chain (2E)-enoyl-CoA + H2O. It functions in the pathway lipid metabolism; fatty acid biosynthesis. Its function is as follows. Catalyzes the third of the four reactions of the long-chain fatty acids elongation cycle. This endoplasmic reticulum-bound enzymatic process, allows the addition of two carbons to the chain of long- and very long-chain fatty acids/VLCFAs per cycle. This enzyme catalyzes the dehydration of the 3-hydroxyacyl-CoA intermediate into trans-2,3-enoyl-CoA, within each cycle of fatty acid elongation. Thereby, it participates in the production of VLCFAs of different chain lengths that are involved in multiple biological processes as precursors of membrane lipids and lipid mediators. This chain is Very-long-chain (3R)-3-hydroxyacyl-CoA dehydratase hpo-8 (hpo-8), found in Caenorhabditis elegans.